A 44-amino-acid polypeptide reads, in one-letter code: MESPAFFFTIFLWCLLLSVTGYSVYVGFGPPSKDLRDPFDEHED.

The chain crosses the membrane as a helical span at residues 6-26 (FFFTIFLWCLLLSVTGYSVYV).

It belongs to the PsbN family.

It localises to the plastid. The protein resides in the chloroplast thylakoid membrane. In terms of biological role, may play a role in photosystem I and II biogenesis. The protein is Protein PsbN of Oltmannsiellopsis viridis (Marine flagellate).